A 364-amino-acid chain; its full sequence is Caffeic acid 3-O-methyltransferase (364 aa).

131–137 (MNQDKVL) is a binding site for substrate. The segment at 163–181 (AFEYHGTDSRFNRVFNEGM) is substrate binding. Positions 209, 232, 252, 253, and 266 each coordinate S-adenosyl-L-methionine. Residue His-270 is the Proton acceptor of the active site.

This sequence belongs to the class I-like SAM-binding methyltransferase superfamily. Cation-independent O-methyltransferase family. COMT subfamily. As to quaternary structure, homodimer. Confined to the vascular tissues of organs undergoing lignification such as stems and roots.

It carries out the reaction (E)-caffeate + S-adenosyl-L-methionine = (E)-ferulate + S-adenosyl-L-homocysteine + H(+). The enzyme catalyses tricetin + 2 S-adenosyl-L-methionine = 3',5'-di-O-methyltricetin + 2 S-adenosyl-L-homocysteine + 2 H(+). The catalysed reaction is luteolin + S-adenosyl-L-methionine = chrysoeriol + S-adenosyl-L-homocysteine + H(+). It catalyses the reaction tricetin + S-adenosyl-L-methionine = 3'-O-methyltricetin + S-adenosyl-L-homocysteine + H(+). The protein operates within aromatic compound metabolism; phenylpropanoid biosynthesis. Functionally, catalyzes the conversion of caffeic acid to ferulic acid and of 5-hydroxyferulic acid to sinapic acid. The resulting products may subsequently be converted to the corresponding alcohols that are incorporated into lignins. Can use the flavone tricetin (5,7,3',4',5'-pentahydroxyflavone) as the preferred substrate and give rise to its 3',5'-dimethyl derivative, tricin (3',5'-dimethoxy-5,7,4'-trihydroxyflavone), as the major product, and selgin to a lower extent. Tricin exhibits potential benefits for human health including relaxant effect on smooth muscle of intestinal tissues, antioxidant effect, antihistaminic activity, and growth inhibition of human malignant breast tumor cells and colon cancer cells. Can also use luteolin, quercetin and 5-hydroxyferulic acid (5HF) as substrates. The polypeptide is Caffeic acid 3-O-methyltransferase (Zea mays (Maize)).